The chain runs to 327 residues: Tetraacyldisaccharide 4'-kinase (327 aa).

Position 52–59 (52–59 (TLGGAGKT)) interacts with ATP.

Belongs to the LpxK family.

It catalyses the reaction a lipid A disaccharide + ATP = a lipid IVA + ADP + H(+). It functions in the pathway glycolipid biosynthesis; lipid IV(A) biosynthesis; lipid IV(A) from (3R)-3-hydroxytetradecanoyl-[acyl-carrier-protein] and UDP-N-acetyl-alpha-D-glucosamine: step 6/6. In terms of biological role, transfers the gamma-phosphate of ATP to the 4'-position of a tetraacyldisaccharide 1-phosphate intermediate (termed DS-1-P) to form tetraacyldisaccharide 1,4'-bis-phosphate (lipid IVA). This Methylorubrum extorquens (strain PA1) (Methylobacterium extorquens) protein is Tetraacyldisaccharide 4'-kinase.